We begin with the raw amino-acid sequence, 191 residues long: Polysulfide reductase chain B (191 aa).

4Fe-4S ferredoxin-type domains follow at residues 5–34 (YGMIHDENLCIGCQACNIACRSENKIPDSV), 50–83 (GTLSFNYHRQSCVQCENTPCVSVCPTKASYVNED), and 84–113 (GIVSVNVDLCVGCLYCIAACPYQARYVDPV). 16 residues coordinate [4Fe-4S] cluster: cysteine 14, cysteine 17, cysteine 20, cysteine 24, cysteine 61, cysteine 64, cysteine 69, cysteine 73, cysteine 93, cysteine 96, cysteine 99, cysteine 103, cysteine 120, cysteine 123, cysteine 136, and cysteine 140.

Functional polysulfide reductase is made up of three different (A, B, and C) subunits.

In terms of biological role, component of the phosphorylative electron transport system with polysulfide as the terminal acceptor. The chain is Polysulfide reductase chain B (psrB) from Wolinella succinogenes (strain ATCC 29543 / DSM 1740 / CCUG 13145 / JCM 31913 / LMG 7466 / NCTC 11488 / FDC 602W) (Vibrio succinogenes).